Consider the following 654-residue polypeptide: Pentatricopeptide repeat-containing protein At3g16610 (654 aa).

PPR repeat units follow at residues 1-32 (MFLS…SLTL), 34-64 (SSTV…IPHP), 67-101 (NPIA…GVRP), 102-136 (TKYT…DFAT), 137-171 (DMYV…DMVA), 172-203 (WNAM…GLSP), 204-238 (NLST…GFSN), 239-269 (DLVV…DFKK), 270-304 (NEVT…DNVA), 307-341 (TPVA…GFIL), 342-372 (DLTV…IGLK), 373-407 (DVIS…GIRP), 408-442 (DITT…GYAV), 443-473 (NTSI…MHKR), 474-508 (DIVS…GVNP), 509-543 (DEVT…DFNV), and 546-576 (RIDH…MPFE). The type E motif; degenerate stretch occupies residues 581–654 (VLGTLLSACW…KTPGYSWVDV (74 aa)).

The protein belongs to the PPR family. PCMP-E subfamily.

This chain is Pentatricopeptide repeat-containing protein At3g16610 (PCMP-E91), found in Arabidopsis thaliana (Mouse-ear cress).